The sequence spans 79 residues: D-alanyl carrier protein (79 aa).

The region spanning 1-77 is the Carrier domain; that stretch reads MDIKAEVIEI…KIVEGVTELR (77 aa). O-(pantetheine 4'-phosphoryl)serine is present on serine 35.

Belongs to the DltC family. Post-translationally, 4'-phosphopantetheine is transferred from CoA to a specific serine of apo-DCP.

Its subcellular location is the cytoplasm. Its pathway is cell wall biogenesis; lipoteichoic acid biosynthesis. In terms of biological role, carrier protein involved in the D-alanylation of lipoteichoic acid (LTA). The loading of thioester-linked D-alanine onto DltC is catalyzed by D-alanine--D-alanyl carrier protein ligase DltA. The DltC-carried D-alanyl group is further transferred to cell membrane phosphatidylglycerol (PG) by forming an ester bond, probably catalyzed by DltD. D-alanylation of LTA plays an important role in modulating the properties of the cell wall in Gram-positive bacteria, influencing the net charge of the cell wall. The protein is D-alanyl carrier protein of Streptococcus sanguinis (strain SK36).